The chain runs to 1060 residues: MDSGAGGRRCPEAALLILGPPRMEHLRHSPGPGGQRLLLPSMLLALLLLLAPSPGHATRVVYKVPEEQPPNTLIGSLAADYGFPDVGHLYKLEVGAPYLRVDGKTGDIFTTETSIDREGLRECQNQLPGDPCILEFEVSITDLVQNGSPRLLEGQIEVQDINDNTPNFASPVITLAIPENTNIGSLFPIPLASDRDAGPNGVASYELQAGPEAQELFGLQVAEDQEEKQPQLIVMGNLDRERWDSYDLTIKVQDGGSPPRASSALLRVTVLDTNDNAPKFERPSYEAELSENSPIGHSVIQVKANDSDQGANAEIEYTFHQAPEVVRRLLRLDRNTGLITVQGPVDREDLSTLRFSVLAKDRGTNPKSARAQVVVTVKDMNDNAPTIEIRGIGLVTHQDGMANISEDVAEETAVALVQVSDRDEGENAAVTCVVAGDVPFQLRQASETGSDSKKKYFLQTTTPLDYEKVKDYTIEIVAVDSGNPPLSSTNSLKVQVVDVNDNAPVFTQSVTEVAFPENNKPGEVIAEITASDADSGSNAELVYSLEPEPAAKGLFTISPETGEIQVKTSLDREQRESYELKVVAADRGSPSLQGTATVLVNVLDCNDNDPKFMLSGYNFSVMENMPALSPVGMVTVIDGDKGENAQVQLSVEQDNGDFVIQNGTGTILSSLSFDREQQSTYTFQLKAVDGGVPPRSAYVGVTINVLDENDNAPYITAPSNTSHKLLTPQTRLGETVSQVAAEDFDSGVNAELIYSIAGGNPYGLFQIGSHSGAITLEKEIERRHHGLHRLVVKVSDRGKPPRYGTALVHLYVNETLANRTLLETLLGHSLDTPLDIDIAGDPEYERSKQRGNILFGVVAGVVAVALLIALAVLVRYCRQREAKSGYQAGKKETKDLYAPKPSGKASKGNKSKGKKSKSPKPVKPVEDEDEAGLQKSLKFNLMSDAPGDSPRIHLPLNYPPGSPDLGRHYRSNSPLPSIQLQPQSPSASKKHQVVQDLPPANTFVGTGDTTSTGSEQYSDYSYRTNPPKYPSKQVGQPFQLSTPQPLPHPYHGAIWTEVWE.

A signal peptide spans 1 to 57; it reads MDSGAGGRRCPEAALLILGPPRMEHLRHSPGPGGQRLLLPSMLLALLLLLAPSPGHA. 7 Cadherin domains span residues 58-168, 169-280, 281-387, 396-506, 507-612, 613-715, and 718-844; these read TRVV…TPNF, ASPV…APKF, ERPS…APTI, THQD…APVF, TQSV…DPKF, MLSG…APYI, and PSNT…DPEY. The Extracellular segment spans residues 58-852; that stretch reads TRVVYKVPEE…EYERSKQRGN (795 aa). Residues N305 and N403 are each glycosylated (N-linked (GlcNAc...) asparagine). 4 N-linked (GlcNAc...) asparagine glycosylation sites follow: N618, N662, N813, and N818. The helical transmembrane segment at 853-873 threads the bilayer; that stretch reads ILFGVVAGVVAVALLIALAVL. The Cytoplasmic portion of the chain corresponds to 874–1060; the sequence is VRYCRQREAK…HGAIWTEVWE (187 aa). The span at 884-897 shows a compositional bias: basic and acidic residues; it reads SGYQAGKKETKDLY. The disordered stretch occupies residues 884–1045; sequence SGYQAGKKET…QPFQLSTPQP (162 aa). Basic residues predominate over residues 907–920; sequence KGNKSKGKKSKSPK. Phosphoserine occurs at positions 918, 949, 962, and 984. Over residues 973 to 986 the composition is skewed to low complexity; sequence SPLPSIQLQPQSPS. Polar residues-rich tracts occupy residues 1003 to 1024 and 1033 to 1043; these read FVGTGDTTSTGSEQYSDYSYRT and QVGQPFQLSTP.

Highly expressed in the brain and neuro-glial cells.

It is found in the cell junction. Its subcellular location is the cell membrane. In terms of biological role, may be involved in cell-cell interaction processes and in cell adhesion. In Homo sapiens (Human), this protein is Protocadherin-1 (PCDH1).